The following is a 473-amino-acid chain: Protein nucleotidyltransferase YdiU (473 aa).

Positions 79, 81, 82, 102, 114, 115, 165, and 172 each coordinate ATP. Residue D241 is the Proton acceptor of the active site. The Mg(2+) site is built by N242 and D251. ATP is bound at residue D251.

It belongs to the SELO family. Mg(2+) is required as a cofactor. Requires Mn(2+) as cofactor.

The catalysed reaction is L-seryl-[protein] + ATP = 3-O-(5'-adenylyl)-L-seryl-[protein] + diphosphate. It catalyses the reaction L-threonyl-[protein] + ATP = 3-O-(5'-adenylyl)-L-threonyl-[protein] + diphosphate. It carries out the reaction L-tyrosyl-[protein] + ATP = O-(5'-adenylyl)-L-tyrosyl-[protein] + diphosphate. The enzyme catalyses L-histidyl-[protein] + UTP = N(tele)-(5'-uridylyl)-L-histidyl-[protein] + diphosphate. The catalysed reaction is L-seryl-[protein] + UTP = O-(5'-uridylyl)-L-seryl-[protein] + diphosphate. It catalyses the reaction L-tyrosyl-[protein] + UTP = O-(5'-uridylyl)-L-tyrosyl-[protein] + diphosphate. In terms of biological role, nucleotidyltransferase involved in the post-translational modification of proteins. It can catalyze the addition of adenosine monophosphate (AMP) or uridine monophosphate (UMP) to a protein, resulting in modifications known as AMPylation and UMPylation. The chain is Protein nucleotidyltransferase YdiU from Marinomonas sp. (strain MWYL1).